The primary structure comprises 384 residues: Glucans biosynthesis protein C (384 aa).

Helical transmembrane passes span 17 to 37, 54 to 74, 91 to 111, 140 to 160, 173 to 193, 212 to 232, 240 to 260, 274 to 294, 311 to 331, and 338 to 358; these read AWLM…THSW, FIHA…SYML, VGIP…ILLQ, LWFL…FTWF, AISL…YAAI, FIVM…LAFI, FTTP…AYLL, TESV…FSLG, ASLF…AYIT, and LIGF…LYEI.

This sequence belongs to the acyltransferase 3 family. OpgC subfamily.

The protein localises to the cell membrane. The protein operates within glycan metabolism; osmoregulated periplasmic glucan (OPG) biosynthesis. In terms of biological role, necessary for the succinyl substitution of periplasmic glucans. Could catalyze the transfer of succinyl residues from the cytoplasmic side of the membrane to the nascent glucan backbones on the periplasmic side of the membrane. This chain is Glucans biosynthesis protein C, found in Salmonella typhimurium (strain LT2 / SGSC1412 / ATCC 700720).